An 821-amino-acid chain; its full sequence is KN motif and ankyrin repeat domain-containing protein 3 (821 aa).

Residues 1 to 10 (MAKFALNQNL) are compositionally biased toward polar residues. Disordered stretches follow at residues 1-36 (MAKFALNQNLPDLGGPRLCPVPAAGGARSPSSPYSV), 58-184 (GPAA…AQLQ), 224-333 (LLAG…APET), and 385-547 (AAEE…GRCE). Positions 77–88 (RPGLAGARSPGA) are enriched in low complexity. Basic and acidic residues predominate over residues 128–150 (PRVEHTLRETSRRLELAQTHERA). Residues 151–181 (PSPGRGVPRSPRGSGRSSPAPNLAPASPGPA) are compositionally biased toward low complexity. 6 positions are modified to phosphoserine: S152, S160, S164, S167, S168, and S177. Residues 181 to 230 (AQLQLVREQMAAALRRLRELEDQARTLPELQEQVRALRAEKARLLAGRAQ) adopt a coiled-coil conformation. The span at 237–261 (AETRPDKLAQLRRLTERLATSERGG) shows a compositional bias: basic and acidic residues. Residues S271, S280, and S293 each carry the phosphoserine modification. The stretch at 367-404 (GVSELLRGRLRELEEAREAAEEAAAGARAQLREATTQT) forms a coiled coil. 2 stretches are compositionally biased toward low complexity: residues 388 to 400 (EAAAGARAQLREA) and 494 to 507 (NGGAEPPGSSSGSG). ANK repeat units lie at residues 622–652 (NGNTALHYSVSHGNLAIASLLLDTGACEVNR), 656–690 (AGYSALMLAALTSVRQEEEDMAVVQRLFCMGDVNA), 695–724 (TGQTALMLAISHGRQDMVATLLACGADVNA), 728–758 (DGATALMCASEYGRLDTVRLLLTQPGCDPAI), and 762–785 (EGTSALAIALEAEQDEVAALLHAH). Positions 784–821 (AHLSSGQPDTQSESPPGSQTATPGEGECGDNGENPQVQ) are disordered. The span at 787-805 (SSGQPDTQSESPPGSQTAT) shows a compositional bias: polar residues.

Strongly expressed in breast, liver, lung, skeletal muscle and kidney.

Its function is as follows. May be involved in the control of cytoskeleton formation by regulating actin polymerization. The chain is KN motif and ankyrin repeat domain-containing protein 3 from Homo sapiens (Human).